Consider the following 253-residue polypeptide: tRNA pseudouridine synthase A (253 aa).

Aspartate 53 (nucleophile) is an active-site residue. Substrate is bound at residue tyrosine 112.

This sequence belongs to the tRNA pseudouridine synthase TruA family. In terms of assembly, homodimer.

The enzyme catalyses uridine(38/39/40) in tRNA = pseudouridine(38/39/40) in tRNA. Formation of pseudouridine at positions 38, 39 and 40 in the anticodon stem and loop of transfer RNAs. This chain is tRNA pseudouridine synthase A, found in Lactococcus lactis subsp. cremoris (strain SK11).